The primary structure comprises 159 residues: Transmembrane protein 88 (159 aa).

Transmembrane regions (helical) follow at residues 43–63 (LLLL…MLGF) and 88–108 (FTAL…LALA).

The protein belongs to the TMEM88 family. Interacts (via C-terminus) with DVL1.

It is found in the cell membrane. Its function is as follows. Inhibits the Wnt/beta-catenin signaling pathway. Crucial for heart development and acts downstream of GATA factors in the pre-cardiac mesoderm to specify lineage commitment of cardiomyocyte development. This is Transmembrane protein 88 (Tmem88) from Mus musculus (Mouse).